The primary structure comprises 259 residues: TCF3 fusion partner homolog (259 aa).

Disordered stretches follow at residues 50–72 and 141–210; these read GGLG…GRRR and EDDG…APVQ. At serine 167 the chain carries Phosphoserine. Over residues 167 to 178 the composition is skewed to polar residues; sequence SPSQRTTATLDP. Threonine 172 is subject to Phosphothreonine. Serine 180 and serine 188 each carry phosphoserine. Phosphothreonine is present on threonine 203. Residue lysine 222 forms a Glycyl lysine isopeptide (Lys-Gly) (interchain with G-Cter in SUMO2) linkage. Position 255 is a phosphoserine (serine 255).

In terms of assembly, interacts with NOL3; translocates NOL3 into the nucleus and negatively regulated TFPT-induced cell death. Component of the chromatin remodeling INO80 complex; specifically part of a complex module associated with the N-terminus of INO80.

The protein localises to the nucleus. Appears to promote apoptosis in a p53/TP53-independent manner. Functionally, putative regulatory component of the chromatin remodeling INO80 complex which is involved in transcriptional regulation, DNA replication and probably DNA repair. In Mus musculus (Mouse), this protein is TCF3 fusion partner homolog (Tfpt).